A 588-amino-acid chain; its full sequence is Glutamyl-tRNA(Gln) amidotransferase subunit B, mitochondrial (588 aa).

The N-terminal 109 residues, 1–109 (MLRSWIGSGT…RAPTSTSETP (109 aa)), are a transit peptide targeting the mitochondrion. Residues 22–35 (SSLPSPKASFSSAP) show a composition bias toward low complexity. Residues 22–50 (SSLPSPKASFSSAPNRYLQPPTSADRVPL) are disordered.

It belongs to the GatB/GatE family. GatB subfamily. Subunit of the heterotrimeric GatCAB amidotransferase (AdT) complex, composed of A, B and C subunits.

The protein localises to the mitochondrion. It carries out the reaction L-glutamyl-tRNA(Gln) + L-glutamine + ATP + H2O = L-glutaminyl-tRNA(Gln) + L-glutamate + ADP + phosphate + H(+). In terms of biological role, allows the formation of correctly charged Gln-tRNA(Gln) through the transamidation of misacylated Glu-tRNA(Gln) in the mitochondria. The reaction takes place in the presence of glutamine and ATP through an activated gamma-phospho-Glu-tRNA(Gln). This Penicillium rubens (strain ATCC 28089 / DSM 1075 / NRRL 1951 / Wisconsin 54-1255) (Penicillium chrysogenum) protein is Glutamyl-tRNA(Gln) amidotransferase subunit B, mitochondrial.